The chain runs to 273 residues: Large ribosomal subunit protein uL2 (273 aa).

The interval 224 to 263 is disordered; sequence AMNPVDHPHGGGEGRNFGKHPVTPWGLQTKGKKTRKNKRT. A compositionally biased stretch (basic residues) spans 253–263; the sequence is KGKKTRKNKRT.

This sequence belongs to the universal ribosomal protein uL2 family. As to quaternary structure, part of the 50S ribosomal subunit. Forms a bridge to the 30S subunit in the 70S ribosome.

Functionally, one of the primary rRNA binding proteins. Required for association of the 30S and 50S subunits to form the 70S ribosome, for tRNA binding and peptide bond formation. It has been suggested to have peptidyltransferase activity; this is somewhat controversial. Makes several contacts with the 16S rRNA in the 70S ribosome. This chain is Large ribosomal subunit protein uL2, found in Buchnera aphidicola subsp. Schizaphis graminum (strain Sg).